The following is a 138-amino-acid chain: Protein Rrf1 (138 aa).

Positions 4–116 (RILVVQEDPD…LLLALVDRAL (113 aa)) constitute a Response regulatory domain. 4-aspartylphosphate occurs at positions 13 and 53.

Functionally, may be involved in regulation of gene transcription. Belongs to the family of response regulators, and members of this family involved in the regulation of gene transcription are two-domain proteins. This protein contains only the N-terminal phosphorylation domain and not the C-terminal DNA-binding domain but it may bind to Rrf2 protein and the latter may bind to DNA. This Nitratidesulfovibrio vulgaris (strain ATCC 29579 / DSM 644 / CCUG 34227 / NCIMB 8303 / VKM B-1760 / Hildenborough) (Desulfovibrio vulgaris) protein is Protein Rrf1 (rrf1).